The sequence spans 304 residues: MAKIIVIKGTSGTGKGTRVVQFIEWLRTKLKPTELSYTVGDKTRPFGLKFEELKLIFVGQYTVSNKSGLASWTSMDAIHAATGSGDIARDLVKGWLAQGYTLVCEGEPLMLSDKWRPEWMFKNYPIDSLALLYFAYPDRYQYDARIRGRSGKEAGDSGWSRNESYSKEFEKSKAEMLALGWNVAVDDYSGQDVLYHQTATNTQEFKTGNDSELAMLPFDAPLWVVGNAIYHQLGTVCRANNLMSKDFYGYCETNPMTREVGGQDPLAHRVPEKPQKASKTKNKAVAKEEPKTSSVSLLGLMRKA.

A disordered region spans residues 260–304 (VGGQDPLAHRVPEKPQKASKTKNKAVAKEEPKTSSVSLLGLMRKA). A compositionally biased stretch (basic and acidic residues) spans 266–275 (LAHRVPEKPQ).

It belongs to the thymidylate kinase family. 5-hmdU DNA kinase subfamily.

The enzyme catalyses 5-hydroxymethyl-dUMP in DNA + ATP = 5-phosphomethyl-dUMP in DNA + ADP + H(+). Functionally, phosphorylates 5-hydroxymethyluracil (5hmdU) into 5-phosphomethyl-2'-deoxyuridine (5- PmdU) on DNA as a step in the pathway leading to thymidine hypermodifications in the viral genome. The phosphate is added internally to the DNA polymer. As a final result of the pathway of hypermodification, 5-aminoethoxy-2'-deoxymethyluridine (5-NeOmdU) substitutes for about 40% of the thymidines in the viral DNA. These modifications probably prevent degradation of viral genome by the host restriction-modification antiviral defense system. This is 5-hmdU DNA kinase 2 from Salmonella typhi.